The primary structure comprises 282 residues: HTH-type transcriptional activator RhaR (282 aa).

The HTH araC/xylS-type domain occupies 179 to 277; that stretch reads DKLITALANS…GMTPSQWRHL (99 aa). DNA-binding regions (H-T-H motif) lie at residues 196 to 217 and 244 to 267; these read DAFC…RAQT and ISEI…TRET.

In terms of assembly, binds DNA as a dimer.

It is found in the cytoplasm. Functionally, activates expression of the rhaSR operon in response to L-rhamnose. The polypeptide is HTH-type transcriptional activator RhaR (Salmonella arizonae (strain ATCC BAA-731 / CDC346-86 / RSK2980)).